A 369-amino-acid polypeptide reads, in one-letter code: Phenylalanine--tRNA ligase alpha subunit (369 aa).

Residue Glu-272 participates in Mg(2+) binding.

The protein belongs to the class-II aminoacyl-tRNA synthetase family. Phe-tRNA synthetase alpha subunit type 1 subfamily. Tetramer of two alpha and two beta subunits. It depends on Mg(2+) as a cofactor.

The protein localises to the cytoplasm. It catalyses the reaction tRNA(Phe) + L-phenylalanine + ATP = L-phenylalanyl-tRNA(Phe) + AMP + diphosphate + H(+). This is Phenylalanine--tRNA ligase alpha subunit from Cutibacterium acnes (strain DSM 16379 / KPA171202) (Propionibacterium acnes).